The chain runs to 760 residues: Sphingosine kinase B (760 aa).

The disordered stretch occupies residues 1 to 108 (MENNNNEPAE…NNNNNEPVTS (108 aa)). Positions 12–39 (VQEKGPKLKNDIDLNDQFKDEKEKKEEI) are enriched in basic and acidic residues. The span at 40-106 (SSSSIENKNN…NNNNNNNEPV (67 aa)) shows a compositional bias: low complexity. The DAGKc domain maps to 247 to 383 (PKNRKIRILI…LDVCIVQQPT (137 aa)). ATP is bound by residues 257–259 (NPK) and Thr-288. 313–316 (SGDG) provides a ligand contact to substrate. Asp-315 acts as the Proton donor/acceptor in catalysis. ATP is bound by residues Glu-320 and 345 to 347 (GTG). A disordered region spans residues 394-438 (TVTTTTTTTSPTSASPTITSANNNNNNNNNNNNNNNNNNNNNNNN). Asp-461 is a substrate binding site. Positions 468 and 474 each coordinate ATP. Residues 535-605 (DNDNNNKNKN…SSPRSDINMS (71 aa)) form a disordered region. Over residues 549–597 (EINSTTSNNNNNNNTTTTSTSSSTSTSTSTSSLTATTTTAKSTNSLSSS) the composition is skewed to low complexity. 734 to 736 (DGE) serves as a coordination point for ATP.

The enzyme catalyses a sphingoid base + ATP = a sphingoid 1-phosphate + ADP + H(+). Its activity is regulated as follows. Inhibited by N,N,-dimethylsphingosine. Catalyzes the phosphorylation of sphingosine to form sphingosine-1-phosphate (S1P), which probably acts intracellularly as a second messenger perhaps by promoting cell proliferation. The chain is Sphingosine kinase B (sgkB) from Dictyostelium discoideum (Social amoeba).